The following is a 228-amino-acid chain: MEIVKSRFKRVCVFCGSSSGKRECYSDAATDLAQELVTRRLNLVYGGGSIGLMGLVSQAVHEAGGHVLGIIPRTLMDKEITGETYGEVIAVADMHERKAEMARHSDCFIALPGGYGTLEELLEVIAWAQLGIHDKPVGLLNVDGYYNYLLTFIDKAVDDGFIKPSQRHIFVSAPNAKELVQKLEAYKPVNDGVIAKSRWEVEKKVQQPQQQQQVVFCSNTSMQTEIAL.

Substrate-binding positions include E79, 97-98, and 114-120; these read RK and GYGTLEE.

This sequence belongs to the LOG family. In terms of tissue distribution, expressed in roots and shoots. Detected in vascular tissues of roots, cotyledons, and leaves, axillary buds, immature and mature flowers, fruit abscission zones and ovules.

The protein localises to the cytoplasm. Its subcellular location is the nucleus. The enzyme catalyses N(6)-(dimethylallyl)adenosine 5'-phosphate + H2O = N(6)-dimethylallyladenine + D-ribose 5-phosphate. The catalysed reaction is 9-ribosyl-trans-zeatin 5'-phosphate + H2O = trans-zeatin + D-ribose 5-phosphate. Cytokinin-activating enzyme working in the direct activation pathway. Phosphoribohydrolase that converts inactive cytokinin nucleotides to the biologically active free-base forms. The protein is Cytokinin riboside 5'-monophosphate phosphoribohydrolase LOG5 (LOG5) of Arabidopsis thaliana (Mouse-ear cress).